The following is a 38-amino-acid chain: Photosystem II reaction center protein T (38 aa).

A helical membrane pass occupies residues 3 to 23 (ALVYTFLLVSTLGIIFFAIFF).

This sequence belongs to the PsbT family. In terms of assembly, PSII is composed of 1 copy each of membrane proteins PsbA, PsbB, PsbC, PsbD, PsbE, PsbF, PsbH, PsbI, PsbJ, PsbK, PsbL, PsbM, PsbT, PsbY, PsbZ, Psb30/Ycf12, at least 3 peripheral proteins of the oxygen-evolving complex and a large number of cofactors. It forms dimeric complexes.

The protein resides in the plastid. Its subcellular location is the chloroplast thylakoid membrane. Found at the monomer-monomer interface of the photosystem II (PS II) dimer, plays a role in assembly and dimerization of PSII. PSII is a light-driven water plastoquinone oxidoreductase, using light energy to abstract electrons from H(2)O, generating a proton gradient subsequently used for ATP formation. This chain is Photosystem II reaction center protein T, found in Secale cereale (Rye).